We begin with the raw amino-acid sequence, 430 residues long: Histidine--tRNA ligase (430 aa).

This sequence belongs to the class-II aminoacyl-tRNA synthetase family. As to quaternary structure, homodimer.

It localises to the cytoplasm. The enzyme catalyses tRNA(His) + L-histidine + ATP = L-histidyl-tRNA(His) + AMP + diphosphate + H(+). The chain is Histidine--tRNA ligase from Acinetobacter baumannii (strain SDF).